The following is a 174-amino-acid chain: Interleukin-1 receptor antagonist protein (174 aa).

The N-terminal stretch at 1-23 (MDIYIHGYLICLLLFLFRSETAC) is a signal peptide. Cys-89 and Cys-139 form a disulfide bridge. Asn-107 carries N-linked (GlcNAc...) asparagine glycosylation.

The protein belongs to the IL-1 family.

The protein resides in the secreted. Its function is as follows. Anti-inflammatory antagonist of interleukin-1 family of proinflammatory cytokines such as interleukin-1beta/IL1B and interleukin-1alpha/IL1A. Protects from immune dysregulation and uncontrolled systemic inflammation triggered by IL1 for a range of innate stimulatory agents such as pathogens. This Bos taurus (Bovine) protein is Interleukin-1 receptor antagonist protein (IL1RN).